The sequence spans 137 residues: Photosystem II reaction center W protein, chloroplastic (137 aa).

Residues 1-64 constitute a chloroplast transit peptide; the sequence is MATITASSSA…ETTTTTNKSM (64 aa). Residues 65–83 constitute a thylakoid transit peptide; it reads GASLLAAAAAATISNPAMA. At 84–103 the chain is on the lumenal, thylakoid side; sequence LVDERMSTEGTGLPFGLSNN. Residues 104–123 form a helical membrane-spanning segment; the sequence is LLGWILFGVFGLIWALYFVY. At 124–137 the chain is on the stromal side; that stretch reads ASGLEEDEESGLSL.

As to quaternary structure, part of the photosystem II complex. PSII is composed of 1 copy each of membrane proteins PsbA, PsbB, PsbC, PsbD, numerous small proteins, at least 3 peripheral proteins of the oxygen-evolving complex and a large number of cofactors. It forms dimeric complexes.

It localises to the plastid. The protein localises to the chloroplast thylakoid membrane. Its function is as follows. Stabilizes dimeric photosystem II (PSII). In its absence no dimeric PSII accumulates and there is a reduction of monomeric PSII. The chain is Photosystem II reaction center W protein, chloroplastic from Spinacia oleracea (Spinach).